The chain runs to 225 residues: RNA-binding protein 24-A (225 aa).

The RRM domain maps to 11 to 88 (TKIFVGGLPY…RKANVNLAYL (78 aa)).

It is found in the nucleus. Its subcellular location is the cytoplasm. Multifunctional RNA-binding protein involved in the regulation of pre-mRNA splicing, mRNA stability and mRNA translation important for cell fate decision and differentiation. Plays a major role in pre-mRNA alternative splicing regulation. Mediates preferentially muscle-specific exon inclusion in numerous mRNAs important for striated cardiac and skeletal muscle cell differentiation. Binds to intronic splicing enhancer (ISE) composed of stretches of GU-rich motifs localized in flanking intron of exon that will be included by alternative splicing. Involved in embryonic stem cell (ESC) transition to cardiac cell differentiation by promoting pre-mRNA alternative splicing events of several pluripotency and/or differentiation genes. Plays a role in the regulation of mRNA stability and mRNA translation to which it is bound. Involved in myogenic differentiation by regulating myog levels. Binds to a huge amount of mRNAs. Required for embryonic heart development, sarcomer and M-band formation in striated muscles. The chain is RNA-binding protein 24-A (rbm24-a) from Xenopus laevis (African clawed frog).